The chain runs to 737 residues: Zinc finger protein 585A (737 aa).

In terms of domain architecture, KRAB spans methionine 1–proline 65. C2H2-type zinc fingers lie at residues tyrosine 126–histidine 148, phenylalanine 154–histidine 176, tyrosine 182–histidine 204, histidine 210–histidine 232, tyrosine 238–histidine 260, and tyrosine 266–histidine 288. Residues tyrosine 294 to glutamine 316 form a C2H2-type 7; degenerate zinc finger. 15 C2H2-type zinc fingers span residues serine 322 to histidine 344, tyrosine 350 to histidine 372, tyrosine 378 to histidine 400, tyrosine 406 to histidine 428, tyrosine 434 to histidine 456, tyrosine 462 to histidine 484, tyrosine 490 to histidine 512, tyrosine 518 to histidine 540, tyrosine 546 to histidine 568, tyrosine 574 to histidine 596, tyrosine 602 to histidine 624, tyrosine 630 to histidine 652, tyrosine 658 to histidine 680, tyrosine 686 to histidine 708, and tyrosine 714 to histidine 736.

This sequence belongs to the krueppel C2H2-type zinc-finger protein family.

Its subcellular location is the nucleus. Functionally, may be involved in transcriptional regulation. This chain is Zinc finger protein 585A (ZNF585A), found in Pongo abelii (Sumatran orangutan).